A 641-amino-acid chain; its full sequence is White-opaque regulator 3 (641 aa).

Residues 13-27 (ANVNHQQLSQDTNSI) are compositionally biased toward polar residues. Disordered stretches follow at residues 13–38 (ANVN…QQQP), 146–245 (QLAS…PMTR), and 258–287 (PIIY…PEPR). Low complexity-rich tracts occupy residues 28–38 (PQQQLQQQQQP) and 151–160 (QNQDQNQSQN). The span at 161-172 (RYEQSSMTSIHT) shows a compositional bias: polar residues. Residues 173-184 (NDNSSSVNNSPN) are compositionally biased toward low complexity. Over residues 193 to 204 (STFQPQHSNEGS) the composition is skewed to polar residues. Low complexity-rich tracts occupy residues 216-242 (QQQQ…PQQP) and 264-280 (SSNS…NSSS). The dksA C4-type zinc finger occupies 317–337 (CRRCGSEIPLAERRFVLCPSC). Disordered regions lie at residues 366 to 409 (LSKE…KVCQ), 480 to 507 (MSHQ…PQPH), 522 to 550 (NSGV…HNGS), and 568 to 641 (LQLQ…YPNN). The span at 379-400 (QNNKSNEDQNNESRRGSQEKPA) shows a compositional bias: basic and acidic residues. Residues 486–495 (QPPPPPPPPL) show a composition bias toward pro residues. Over residues 522 to 533 (NSGVAGIQQPNN) the composition is skewed to polar residues. A compositionally biased stretch (low complexity) spans 569 to 579 (QLQQQQQQQQQ). The segment covering 597–606 (SFPPPPPPPL) has biased composition (pro residues). A compositionally biased stretch (low complexity) spans 610 to 641 (QHQGLQQYSHAQQQQQQQHQQQQPYHQEYPNN).

The protein localises to the nucleus. In terms of biological role, transcription factor that modulates the white-opaque switch. The sequence is that of White-opaque regulator 3 (WOR3) from Candida albicans (strain SC5314 / ATCC MYA-2876) (Yeast).